The sequence spans 130 residues: Small ribosomal subunit protein uS8 (130 aa).

It belongs to the universal ribosomal protein uS8 family. Part of the 30S ribosomal subunit. Contacts proteins S5 and S12.

In terms of biological role, one of the primary rRNA binding proteins, it binds directly to 16S rRNA central domain where it helps coordinate assembly of the platform of the 30S subunit. The sequence is that of Small ribosomal subunit protein uS8 from Shewanella sp. (strain MR-7).